The chain runs to 174 residues: CASP-like protein 4D2 (174 aa).

The Cytoplasmic segment spans residues Met-1–Lys-14. Residues Val-15 to Leu-35 form a helical membrane-spanning segment. Residues Ser-36 to Arg-60 lie on the Extracellular side of the membrane. The chain crosses the membrane as a helical span at residues Tyr-61–Ile-81. The Cytoplasmic portion of the chain corresponds to Ser-82–Ser-150. Residues Leu-151–Ala-171 form a helical membrane-spanning segment. At Lys-172–Asn-174 the chain is on the extracellular side.

This sequence belongs to the Casparian strip membrane proteins (CASP) family. Homodimer and heterodimers.

Its subcellular location is the cell membrane. In Arabidopsis lyrata subsp. lyrata (Lyre-leaved rock-cress), this protein is CASP-like protein 4D2.